Reading from the N-terminus, the 137-residue chain is Recombination protein uvsY (137 aa).

In terms of assembly, homohexamer. Interacts with gp32.

Plays a role in viral DNA synthesis by promoting enzymatic activities of UvsX recombinase, by promoting UvsX-ssDNA filament assembly, and by helping UvsX to displace bound gp32 from ssDNA. The polypeptide is Recombination protein uvsY (uvsY) (Escherichia coli (Bacteriophage T4)).